We begin with the raw amino-acid sequence, 498 residues long: MAIPQKATVLVIGGGPGGSYSASALAREGIDTVVLEADVFPRYHIGESLVASIRPFLKFIDLDDTFVNYGFVRKNGAAFKLNNQKEAYTDFILEAGADTFAWNVVRSESDDLMFKHAAKSGAQTFDGVRVTSIEFTDDDDDDDNNTNRPVSASWKAKDGRTGSIEFDYLVDASGRAGITSTKYLKNRTFNNYLKNVASWGYWEGATPYGMGTPVEGQPFFEALQDGSGWVWFIPLHNNTTSIGIVMNQELSTQKKKLSTTTSSRAFYLESLAGARGISRLLDPTTATLTSDIKHASDWSYNASAYGSPYLRIVGDAGAFIDPYFSSGVHLAVSGGLSAAVSIAASIRGDCPEEAAWKWHSQGVANRYGRFLLVVLGATKQIRAGDRPVLNGVGDEGFDEAFMVIRPVIQGIADVQGKVPVQDVYDAVTFSTNVVQPAAEGKRDPGWVEKARGALSHDEKEVGSVLNNLAKAYKTTDVCEGLMARLERGHLGLKLVSEV.

Positions 14, 17, and 47 each coordinate FAD. Residues Ser326 and Gly327 each coordinate chloride. Val328 lines the FAD pocket.

The protein belongs to the flavin-dependent halogenase family.

It carries out the reaction ochratoxin B + FADH2 + chloride + O2 = ochratoxin A + FAD + 2 H2O. The protein operates within mycotoxin biosynthesis. In terms of biological role, flavin-dependent halogenase; part of the gene cluster that mediates the biosynthesis of ochratoxin A (OTA), a mycotoxin composed of a chlorinated type I polyketide dihydroisocoumarin moiety linked to L-phenylalanine, and demonstrated to have nephrotoxic, immunotoxic, genotoxic, neurotoxic, and teratogenic properties. OtaD chlorinates ochratoxin B (OTB) at the C-5 position to form OTA. The pathway begins with the highly reducing polyketide synthase otaA that catalyzes the formation of the isocoumarin group during the initial stages of biosynthesis, starting from one acetate and 4 malonate units, to originate the characteristic pentaketide skeleton 7-methylmellein (7-MM) of the OTA molecule. The newly identified cyclase otaY might be involved in the polyketide cyclization reaction during the initial steps of the OTA biosynthesis. 7-MM is then oxidized into 7-carboxymellein (also called ochratoxin beta) by the cytochrome P450 monooxygenase otaC. The NRPS encoded by the otaB gene is involved in the linking of phenylalanine to the dihydroisocoumarin ring. The reaction catalyzed by NRPS results in the production of ochratoxin B (OTB), which is the non-chlorinated analog of OTA and which subsequently serves as the substrate of the halogenase otaD for chlorination activity to form the final molecular structure of OTA, containing a chlorine atom in the C-5 position of the molecule. This is Flavin-dependent halogenase otaD from Aspergillus carbonarius (strain ITEM 5010).